Reading from the N-terminus, the 310-residue chain is ADP-L-glycero-D-manno-heptose-6-epimerase (310 aa).

NADP(+) contacts are provided by residues 10-11, 31-32, Lys38, Lys53, 75-79, and Asn92; these read FI, DN, and EGACS. Catalysis depends on Tyr140, which acts as the Proton acceptor. Lys144 contributes to the NADP(+) binding site. A substrate-binding site is contributed by Asn169. Residues Val170 and Lys178 each coordinate NADP(+). The Proton acceptor role is filled by Lys178. Residues Ser180, His187, 201–204, and Arg209 contribute to the substrate site; that span reads FEGS. Lys267 is subject to N6-acetyllysine. Residue Tyr272 coordinates substrate.

This sequence belongs to the NAD(P)-dependent epimerase/dehydratase family. HldD subfamily. As to quaternary structure, homopentamer. The cofactor is NADP(+). Requires NAD(+) as cofactor.

The catalysed reaction is ADP-D-glycero-beta-D-manno-heptose = ADP-L-glycero-beta-D-manno-heptose. It participates in nucleotide-sugar biosynthesis; ADP-L-glycero-beta-D-manno-heptose biosynthesis; ADP-L-glycero-beta-D-manno-heptose from D-glycero-beta-D-manno-heptose 7-phosphate: step 4/4. The protein operates within bacterial outer membrane biogenesis; LPS core biosynthesis. Its activity is regulated as follows. Completely inhibited by ADP and ADP-glucose, and partially inhibited by ATP and NADH. In terms of biological role, catalyzes the interconversion between ADP-D-glycero-beta-D-manno-heptose and ADP-L-glycero-beta-D-manno-heptose via an epimerization at carbon 6 of the heptose. The protein is ADP-L-glycero-D-manno-heptose-6-epimerase (hldD) of Escherichia coli (strain K12).